The sequence spans 340 residues: Mitotic checkpoint protein BUB3.1 (340 aa).

A disordered region spans residues 1-20; the sequence is MTTVTPSAGRELSNPPSDGI. WD repeat units follow at residues 15–54, 96–135, 142–179, 239–278, and 281–324; these read PPSD…LKGE, THDK…GPER, LQPE…QPEQ, DIVY…RLYQ, and KYPT…RSVN.

The protein belongs to the WD repeat BUB3 family. In terms of assembly, part of the mitotic checkpoint complex (MCC); interacts with CDC20-1 and CDC20-2. Interacts with MAD2 and BUBR1. As to expression, expressed in actively dividing tissues, early in organ development, in young leaves, lateral root primordia and root meristems, flower buds, flowers and siliques.

Its subcellular location is the nucleus. The protein localises to the chromosome. It is found in the centromere. The protein resides in the kinetochore. It localises to the cytoplasm. Its subcellular location is the cytoskeleton. The protein localises to the phragmoplast. It is found in the spindle. Its function is as follows. Has a dual function in spindle-assembly checkpoint signaling and in promoting the establishment of correct kinetochore-microtubule (K-MT) attachments. Promotes the formation of stable end-on bipolar attachments. Necessary for kinetochore localization of BUB1. The BUB1/BUB3 complex plays a role in the inhibition of anaphase-promoting complex or cyclosome (APC/C) when spindle-assembly checkpoint is activated and inhibits the ubiquitin ligase activity of APC/C by phosphorylating its activator CDC20. Essential for gametophyte development. The chain is Mitotic checkpoint protein BUB3.1 (BUB3.1) from Arabidopsis thaliana (Mouse-ear cress).